Consider the following 411-residue polypeptide: BRO1 domain-containing protein BROX (411 aa).

The region spanning 90 to 408 (FKWTDTLQGQ…DIKPQKDTGC (319 aa)) is the BRO1 domain. Lys-283 bears the N6-acetyllysine mark. Positions 374 to 411 (DLTKRPKDDSTKPKPEEEVKPVKEPDIKPQKDTGCYIS) are disordered. A compositionally biased stretch (basic and acidic residues) spans 375–404 (LTKRPKDDSTKPKPEEEVKPVKEPDIKPQK). At Cys-408 the chain carries Cysteine methyl ester. A lipid anchor (S-farnesyl cysteine) is attached at Cys-408. A propeptide spans 409 to 411 (YIS) (removed in mature form).

It belongs to the BROX family. As to quaternary structure, monomer. Interacts with CHMP4B. Interacts with CHMP5: this interaction allows the recruitment of BROX to cellular membranes. Interacts with SYN2; this interaction promotes SYN2 ubiquitination and facilitates the relaxation of mechanical stress imposed by compressive actin fibers at the rupture site. In terms of processing, farnesylation is required for nuclear envelope localization.

Its subcellular location is the nucleus membrane. Nuclear envelope-associated factor that is involved in the nuclear envelope ruptures during interphase (NERDI) repair, where it is locally recruited by CHMP5 and reduces cytoskeletal stress through its action on SYN2 to help reseal the ruptured membrane. The polypeptide is BRO1 domain-containing protein BROX (Pongo abelii (Sumatran orangutan)).